The primary structure comprises 749 residues: Phototropin (749 aa).

Residues 7–80 form the PAS 1 domain; that stretch reads PASQLTKVLA…QKIRDAIKKG (74 aa). Residues 56-61, arginine 74, asparagine 89, asparagine 99, and glutamine 120 each bind FMN; that span reads NCRFLQ. Cysteine 57 bears the S-4a-FMN cysteine mark. In terms of domain architecture, PAC 1 spans 81–135; sequence EACSVRLLNYRKDGTPFWNLLTVTPIKTPDGRVSKFVGVQVDVTSKTEGKALADN. A PAS 2 domain is found at 200-273; that stretch reads VALDLATTVE…DQIRAAIKEG (74 aa). Residues 274 to 328 form the PAC 2 domain; it reads SELTVRILNYTKAGKAFWNMFTLAPMRDQDGHARFFVGVQVDVTAQSTSPDKAPV. The region spanning 404–712 is the Protein kinase domain; it reads FRRVKQLGAG…ANEIKSHPWF (309 aa). ATP contacts are provided by residues 410 to 418 and lysine 433; that span reads LGAGDVGLV. The Proton acceptor role is filled by aspartate 529. Disordered stretches follow at residues 563–591 and 729–749; these read KIGGAGAAGGSAPKSPKKSSSKSGGSSSG and PRRASKAAGGSSTGGAAFDNY. One can recognise an AGC-kinase C-terminal domain in the interval 713 to 749; sequence KGINWALLRHQQPPYVPRRASKAAGGSSTGGAAFDNY. Residues 734 to 749 show a composition bias toward low complexity; that stretch reads KAAGGSSTGGAAFDNY.

The protein belongs to the protein kinase superfamily. AGC Ser/Thr protein kinase family. The cofactor is FMN. In terms of processing, autophosphorylated in response to blue light irradiation. 2 molecules of FMN bind covalently to cysteines after exposure to blue light and are reversed in the dark. Expressed in gametes, pre-gametes and gametes generated by pre-gametes (at protein level).

Its subcellular location is the membrane. It carries out the reaction L-seryl-[protein] + ATP = O-phospho-L-seryl-[protein] + ADP + H(+). The catalysed reaction is L-threonyl-[protein] + ATP = O-phospho-L-threonyl-[protein] + ADP + H(+). Functionally, protein kinase that acts as a blue light photoreceptor. Required for non-photochemical quenching (NPQ), a mechanism that converts and dissipates the harmful excess absorbed light energy into heat and protect the photosynthetic apparatus from photo-oxidative damage. Controls the energy-dependent chlorophyll fluorescence quenching (qE) activity of chlorophyll excited states by inducing the expression of the qE effector protein LHCSR3 in high light intensities. The sequence is that of Phototropin from Chlamydomonas reinhardtii (Chlamydomonas smithii).